The following is a 269-amino-acid chain: Aminoglycoside N(3)-acetyltransferase III (269 aa).

Belongs to the antibiotic N-acetyltransferase family.

The enzyme catalyses a 2-deoxystreptamine antibiotic + acetyl-CoA = an N(3)-acetyl-2-deoxystreptamine antibiotic + CoA + H(+). In terms of biological role, resistance to antibiotics containing the 2-deoxy-streptamine ring including gentamicin, kanamycin, tobramycin, neomycin and apramycin. The chain is Aminoglycoside N(3)-acetyltransferase III (aac3-Vb) from Serratia marcescens.